We begin with the raw amino-acid sequence, 1145 residues long: Probable ATP-dependent RNA helicase DHX34 (1145 aa).

Residues 1-14 (MPPPRTREGRGHRD) show a composition bias toward basic and acidic residues. Positions 1 to 27 (MPPPRTREGRGHRDRDHHRAPREEEAP) are disordered. The region spanning 174 to 334 (LQTLKEHQVV…FSHAPVVQVP (161 aa)) is the Helicase ATP-binding domain. Residue 187–194 (GDTGCGKS) participates in ATP binding. The DEAH box motif lies at 281 to 284 (DEVH). In terms of domain architecture, Helicase C-terminal spans 370 to 538 (AIDNKYPPEE…ALVLQMKSMS (169 aa)). 2 disordered regions span residues 726–764 (LKRQ…QRAD) and 1091–1114 (NTCP…PQKT). A phosphoserine mark is found at S749 and S750.

This sequence belongs to the DEAD box helicase family. DEAH subfamily. Forms a complex with RUVBL1 and RUVBL2. Part of a complex composed of SMG1, DHX34 and UPF1; within the complex DHX34 acts as a scaffolding protein to facilitate SMG1 phosphorylation of UPF1. Interacts with UPF1, MOV10, EIF4A3, XRN2, SMG6, SMG7, SMG9, UPF3A, UPF3B, CASC3/MLN51, XRN1, DIS3 and DCP1A; the interactions are RNA-independent. Interacts with NCBP1/CPB80; the interaction is RNA-dependent. Interacts (via C-terminus) with SMG1; the interaction is RNA-independent.

It carries out the reaction ATP + H2O = ADP + phosphate + H(+). Functionally, probable ATP-binding RNA helicase. Required for nonsense-mediated decay (NMD) degradation of mRNA transcripts containing premature stop codons. Promotes the phosphorylation of UPF1 along with its interaction with key NMD pathway proteins UPF2 and EIF4A3. Negatively regulates the nucleotide binding ability and ATP hydrolysis of the RUVBL1-RUVBL2 complex via induction of N-terminus conformation changes of the RUVBL2 subunits. The sequence is that of Probable ATP-dependent RNA helicase DHX34 from Mus musculus (Mouse).